Reading from the N-terminus, the 372-residue chain is 4-hydroxy-3-methylbut-2-en-1-yl diphosphate synthase (flavodoxin) (372 aa).

Residues Cys270, Cys273, Cys305, and Glu312 each contribute to the [4Fe-4S] cluster site.

Belongs to the IspG family. [4Fe-4S] cluster is required as a cofactor.

It carries out the reaction (2E)-4-hydroxy-3-methylbut-2-enyl diphosphate + oxidized [flavodoxin] + H2O + 2 H(+) = 2-C-methyl-D-erythritol 2,4-cyclic diphosphate + reduced [flavodoxin]. The protein operates within isoprenoid biosynthesis; isopentenyl diphosphate biosynthesis via DXP pathway; isopentenyl diphosphate from 1-deoxy-D-xylulose 5-phosphate: step 5/6. In terms of biological role, converts 2C-methyl-D-erythritol 2,4-cyclodiphosphate (ME-2,4cPP) into 1-hydroxy-2-methyl-2-(E)-butenyl 4-diphosphate. This is 4-hydroxy-3-methylbut-2-en-1-yl diphosphate synthase (flavodoxin) from Enterobacter sp. (strain 638).